Consider the following 273-residue polypeptide: Putative pyruvate, phosphate dikinase regulatory protein (273 aa).

149 to 156 (GPSRTSKT) provides a ligand contact to ADP.

It belongs to the pyruvate, phosphate/water dikinase regulatory protein family. PDRP subfamily.

It catalyses the reaction N(tele)-phospho-L-histidyl/L-threonyl-[pyruvate, phosphate dikinase] + ADP = N(tele)-phospho-L-histidyl/O-phospho-L-threonyl-[pyruvate, phosphate dikinase] + AMP + H(+). The enzyme catalyses N(tele)-phospho-L-histidyl/O-phospho-L-threonyl-[pyruvate, phosphate dikinase] + phosphate + H(+) = N(tele)-phospho-L-histidyl/L-threonyl-[pyruvate, phosphate dikinase] + diphosphate. Its function is as follows. Bifunctional serine/threonine kinase and phosphorylase involved in the regulation of the pyruvate, phosphate dikinase (PPDK) by catalyzing its phosphorylation/dephosphorylation. This is Putative pyruvate, phosphate dikinase regulatory protein from Rickettsia africae (strain ESF-5).